The primary structure comprises 302 residues: MSTGMTAQAGVDTFGRVGVAMVTPFDQDGALDVSAGRRLAAHLVDNGVDSLILAGTTGESPTTSLDEKLELFAAVKEEVGGRAKLCAGAGTNNTATSIEAARAFADAGADSLLVVTPYYSKPSQAGVYAHFTAVADAVDLPVCLYDIPGRSGIPIETETLLRLAEVPNIKAVKDAKGDLVAAAPLIQETGLAWYSGDDGLNLPWLALGASGVISVIGHIAPRALADLYVAFDEGDIARAREINAKTLSPLVEAQGRLGGVTLVKAALRLQGIEVGEPRLPVTAADAEEIEALRHDLEKAGVL.

Residue threonine 57 participates in pyruvate binding. Tyrosine 145 acts as the Proton donor/acceptor in catalysis. Lysine 173 serves as the catalytic Schiff-base intermediate with substrate. Isoleucine 213 contributes to the pyruvate binding site.

Belongs to the DapA family. In terms of assembly, homotetramer; dimer of dimers.

It localises to the cytoplasm. The enzyme catalyses L-aspartate 4-semialdehyde + pyruvate = (2S,4S)-4-hydroxy-2,3,4,5-tetrahydrodipicolinate + H2O + H(+). It participates in amino-acid biosynthesis; L-lysine biosynthesis via DAP pathway; (S)-tetrahydrodipicolinate from L-aspartate: step 3/4. Its function is as follows. Catalyzes the condensation of (S)-aspartate-beta-semialdehyde [(S)-ASA] and pyruvate to 4-hydroxy-tetrahydrodipicolinate (HTPA). The sequence is that of 4-hydroxy-tetrahydrodipicolinate synthase from Corynebacterium aurimucosum (strain ATCC 700975 / DSM 44827 / CIP 107346 / CN-1) (Corynebacterium nigricans).